Consider the following 657-residue polypeptide: Threonine--tRNA ligase (657 aa).

One can recognise a TGS domain in the interval Ile7–Thr70. Residues Asp253–Pro555 form a catalytic region. Positions 351, 402, and 532 each coordinate Zn(2+).

This sequence belongs to the class-II aminoacyl-tRNA synthetase family. As to quaternary structure, homodimer. Zn(2+) is required as a cofactor.

It localises to the cytoplasm. It carries out the reaction tRNA(Thr) + L-threonine + ATP = L-threonyl-tRNA(Thr) + AMP + diphosphate + H(+). In terms of biological role, catalyzes the attachment of threonine to tRNA(Thr) in a two-step reaction: L-threonine is first activated by ATP to form Thr-AMP and then transferred to the acceptor end of tRNA(Thr). Also edits incorrectly charged L-seryl-tRNA(Thr). In Pelodictyon phaeoclathratiforme (strain DSM 5477 / BU-1), this protein is Threonine--tRNA ligase.